The following is an 81-amino-acid chain: Large ribosomal subunit protein bL27 (81 aa).

Residues 1–11 (MATSKSGGSSK) show a composition bias toward polar residues. The segment at 1–20 (MATSKSGGSSKNGRDSISKR) is disordered.

It belongs to the bacterial ribosomal protein bL27 family.

The polypeptide is Large ribosomal subunit protein bL27 (Borreliella afzelii (strain PKo) (Borrelia afzelii)).